Here is a 565-residue protein sequence, read N- to C-terminus: Transmembrane 7 superfamily member 3 (565 aa).

The signal sequence occupies residues 1 to 21 (MWRLRLLVLAVLAAGSAEAQA). N-linked (GlcNAc...) asparagine glycosylation is found at N22, N56, N70, and N259. 7 consecutive transmembrane segments (helical) span residues 287 to 307 (VSTK…CFFG), 311 to 331 (WKTE…YILI), 341 to 361 (VRLV…VASW), 364 to 384 (FGIL…LVSS), 402 to 422 (VFWV…LGCL), 427 to 447 (ILAC…SYMF), and 478 to 498 (NDYI…TLQI).

It localises to the cell membrane. Involved in the inhibition of cytokine-induced death of pancreatic beta cells. Involved in the promotion of insulin secretion from pancreatic beta cells. Is a downstream transcriptional target of p53/TP53, and acts as a pro-survival homeostatic factor that attenuates the development of cellular stress. Maintains protein homeostasis and promotes cell survival through attenuation of endoplasmic reticulum (ER) stress and the subsequent induction of unfolded protein response (UPR). In Rattus norvegicus (Rat), this protein is Transmembrane 7 superfamily member 3 (Tm7sf3).